The primary structure comprises 295 residues: Phosphonoacetaldehyde hydrolase (295 aa).

Residue Asp36 is the Nucleophile of the active site. Residues Asp36 and Ala38 each coordinate Mg(2+). Lys78 (schiff-base intermediate with substrate) is an active-site residue. Asp212 contacts Mg(2+).

It belongs to the HAD-like hydrolase superfamily. PhnX family. Homodimer. Mg(2+) serves as cofactor.

It carries out the reaction phosphonoacetaldehyde + H2O = acetaldehyde + phosphate + H(+). In terms of biological role, involved in phosphonate degradation. This Psychromonas ingrahamii (strain DSM 17664 / CCUG 51855 / 37) protein is Phosphonoacetaldehyde hydrolase.